The primary structure comprises 457 residues: Chromosomal replication initiator protein DnaA (457 aa).

The tract at residues 1 to 71 (MSPSIWEKCL…LLKNFCNINT (71 aa)) is domain I, interacts with DnaA modulators. The domain II stretch occupies residues 71 to 119 (TTPTLMLKICKPKIIQKKFFNELTLKKNILNSKLTYNVNTKLSNIIYSS). Positions 120-337 (EINTNYTFQN…GALNKILANS (218 aa)) are domain III, AAA+ region. ATP contacts are provided by Gly165, Gly167, Lys168, and Thr169. A domain IV, binds dsDNA region spans residues 338-457 (DSKKKIITIN…FLTLLKILSS (120 aa)).

The protein belongs to the DnaA family. Oligomerizes as a right-handed, spiral filament on DNA at oriC.

It is found in the cytoplasm. Plays an essential role in the initiation and regulation of chromosomal replication. ATP-DnaA binds to the origin of replication (oriC) to initiate formation of the DNA replication initiation complex once per cell cycle. Binds the DnaA box (a 9 base pair repeat at the origin) and separates the double-stranded (ds)DNA. Forms a right-handed helical filament on oriC DNA; dsDNA binds to the exterior of the filament while single-stranded (ss)DNA is stabiized in the filament's interior. The ATP-DnaA-oriC complex binds and stabilizes one strand of the AT-rich DNA unwinding element (DUE), permitting loading of DNA polymerase. After initiation quickly degrades to an ADP-DnaA complex that is not apt for DNA replication. Binds acidic phospholipids. The protein is Chromosomal replication initiator protein DnaA of Buchnera aphidicola subsp. Baizongia pistaciae (strain Bp).